We begin with the raw amino-acid sequence, 576 residues long: ATP-dependent RNA helicase has1 (576 aa).

Residues 1-94 (MGSAQDQTKK…STMGLSLPTD (94 aa)) are disordered. Positions 26 to 37 (RVVEADDQRELT) are enriched in basic and acidic residues. Residues 51–66 (PPTDETPDAEDVEQTE) show a composition bias toward acidic residues. Residues 98–126 (QKFDELNLSEPTMKAIRQMGFETMTEIQQ) carry the Q motif motif. In terms of domain architecture, Helicase ATP-binding spans 129 to 305 (IPPTLAGRDI…RISLKPGPLY (177 aa)). 142 to 149 (AKTGSGKT) provides a ligand contact to ATP. The short motif at 252–255 (DEAD) is the DEAD box element. The Helicase C-terminal domain occupies 319-490 (GVDQGYIICE…DIQSQLEKLI (172 aa)). The segment at 555–576 (DKVQARRPYGSQNKSARFKRRA) is disordered.

Belongs to the DEAD box helicase family. DDX18/HAS1 subfamily. In terms of assembly, associates in the nucleolus with the 60S and pre-60S ribosomal subunits.

It is found in the nucleus. It localises to the nucleolus. The catalysed reaction is ATP + H2O = ADP + phosphate + H(+). Its function is as follows. ATP-dependent RNA helicase involved in 40S ribosomal subunit biogenesis. Required for the processing and cleavage of 35S pre-rRNA at sites A0, A1, and A2, leading to mature 18S rRNA. The chain is ATP-dependent RNA helicase has1 (has1) from Aspergillus terreus (strain NIH 2624 / FGSC A1156).